Consider the following 109-residue polypeptide: MQQFEWIHGAWLGLAIVLEIAANVLLKFSDGFRRKCYGILSLAAVLAAFSALSQAVKGIDLSVAYALWGGFGIAATLAAGWVLFGQRLNPKGWVGVILLLAGMVMIKFA.

A run of 4 helical transmembrane segments spans residues 6-26 (WIHG…NVLL), 36-56 (CYGI…SQAV), 64-84 (AYAL…WVLF), and 88-108 (LNPK…MIKF).

The protein belongs to the drug/metabolite transporter (DMT) superfamily. Small multidrug resistance (SMR) (TC 2.A.7.1) family. MdtI subfamily. Forms a complex with MdtJ.

The protein resides in the cell inner membrane. Its function is as follows. Catalyzes the excretion of spermidine. In Salmonella paratyphi A (strain ATCC 9150 / SARB42), this protein is Spermidine export protein MdtI.